Here is a 165-residue protein sequence, read N- to C-terminus: Urease accessory protein UreE (165 aa).

The protein belongs to the UreE family.

It is found in the cytoplasm. Its function is as follows. Involved in urease metallocenter assembly. Binds nickel. Probably functions as a nickel donor during metallocenter assembly. This chain is Urease accessory protein UreE, found in Flavobacterium johnsoniae (strain ATCC 17061 / DSM 2064 / JCM 8514 / BCRC 14874 / CCUG 350202 / NBRC 14942 / NCIMB 11054 / UW101) (Cytophaga johnsonae).